The primary structure comprises 275 residues: Phosphonoacetaldehyde hydrolase (275 aa).

Catalysis depends on Asp-15, which acts as the Nucleophile. Residues Asp-15 and Ala-17 each contribute to the Mg(2+) site. Lys-56 serves as the catalytic Schiff-base intermediate with substrate. Position 189 (Asp-189) interacts with Mg(2+).

The protein belongs to the HAD-like hydrolase superfamily. PhnX family. As to quaternary structure, homodimer. Mg(2+) is required as a cofactor.

It catalyses the reaction phosphonoacetaldehyde + H2O = acetaldehyde + phosphate + H(+). Inhibited by phosphite, moderately inhibited by phosphonic acids, the corresponding aminophosphonic acids activate the enzyme. In terms of biological role, involved in phosphonate degradation. This is Phosphonoacetaldehyde hydrolase from Pseudomonas aeruginosa (strain ATCC 15692 / DSM 22644 / CIP 104116 / JCM 14847 / LMG 12228 / 1C / PRS 101 / PAO1).